Here is a 75-residue protein sequence, read N- to C-terminus: Putative snRNP Sm-like protein (75 aa).

Positions 4–75 (RPLDVIHRSL…NVLAISPTEE (72 aa)) constitute a Sm domain.

Belongs to the snRNP Sm proteins family.

The sequence is that of Putative snRNP Sm-like protein from Pyrococcus abyssi (strain GE5 / Orsay).